The sequence spans 254 residues: Capsid protein (254 aa).

Polar residues predominate over residues 1–12 (MRKYTRNTYTMS). The tract at residues 1–38 (MRKYTRNTYTMSQKRKVNPQSAWPKKRRTSTTSRKYQW) is disordered. A Bipartite nuclear localization signal motif is present at residues 10-35 (TMSQKRKVNPQSAWPKKRRTSTTSRK).

It belongs to the geminiviridae capsid protein family. As to quaternary structure, homomultimer. Binds to single-stranded and double-stranded viral DNA. Interacts (via nuclear localization signal) with host importin alpha-1a.

The protein resides in the virion. Its subcellular location is the host nucleus. Functionally, encapsidates the viral genome into characteristic twinned ('geminate') particles. Binds the genomic viral ssDNA and shuttles it into and out of the cell nucleus. Plays a role in protection of the genome from degradation, virus acquisition and transmission by insect vectors, infectivity, and systemic movement. The CP of monopartite geminiviruses is absolutely essential for virus movement. The protein is Capsid protein of Beet curly top virus (strain California/Logan) (BCTV).